The chain runs to 276 residues: Radial spoke head protein 9 homolog (276 aa).

The protein belongs to the flagellar radial spoke RSP9 family. As to quaternary structure, component of the axonemal radial spoke 1 (RS1) and 2 (RS2) complexes, at least composed of spoke head proteins RSPH1, RSPH3, RSPH9 and the cilia-specific component RSPH4A or sperm-specific component RSPH6A, spoke stalk proteins RSPH14, DNAJB13, DYDC1, ROPN1L and NME5, and the RS1 complex-specific anchor protein IQUB. Interacts with IQUB. Interacts with RSPH3B. Interacts with RSPH4A. Interacts with RSPH6A. Interacts with CFAP61. Interacts with LRRC23. In terms of tissue distribution, expressed in the testis, trachea, lung, oviduct and ependymal cells (at protein level).

Its subcellular location is the cytoplasm. The protein resides in the cytoskeleton. It localises to the cilium axoneme. The protein localises to the flagellum axoneme. It is found in the cell projection. Its subcellular location is the kinocilium. Functions as part of axonemal radial spoke complexes that play an important part in the motility of sperm and cilia. Essential for both the radial spoke head assembly and the central pair microtubule stability in ependymal motile cilia. Required for motility of olfactory and neural cilia and for the structural integrity of ciliary axonemes in both 9+0 and 9+2 motile cilia. The chain is Radial spoke head protein 9 homolog (Rsph9) from Mus musculus (Mouse).